A 130-amino-acid polypeptide reads, in one-letter code: Fluoride-specific ion channel FluC (130 aa).

The next 4 membrane-spanning stretches (helical) occupy residues 3-23, 38-58, 67-87, and 102-122; these read LVFL…YFVG, LGTF…GHLA, FGIF…SYGL, and ISYV…GWFL. Residues Gly-77 and Thr-80 each contribute to the Na(+) site.

This sequence belongs to the fluoride channel Fluc/FEX (TC 1.A.43) family.

It is found in the cell inner membrane. The catalysed reaction is fluoride(in) = fluoride(out). With respect to regulation, na(+) is not transported, but it plays an essential structural role and its presence is essential for fluoride channel function. Fluoride-specific ion channel. Important for reducing fluoride concentration in the cell, thus reducing its toxicity. This is Fluoride-specific ion channel FluC from Helicobacter pylori (strain J99 / ATCC 700824) (Campylobacter pylori J99).